Consider the following 223-residue polypeptide: Pyridoxal phosphate homeostasis protein (223 aa).

Position 36 is an N6-(pyridoxal phosphate)lysine (K36).

It belongs to the pyridoxal phosphate-binding protein YggS/PROSC family. In terms of assembly, monomer.

Pyridoxal 5'-phosphate (PLP)-binding protein, which is involved in PLP homeostasis. The protein is Pyridoxal phosphate homeostasis protein of Buchnera aphidicola subsp. Baizongia pistaciae (strain Bp).